The primary structure comprises 514 residues: Ferrochelatase-2, chloroplastic (514 aa).

Belongs to the ferrochelatase family.

It is found in the plastid. The protein resides in the chloroplast. It carries out the reaction heme b + 2 H(+) = protoporphyrin IX + Fe(2+). It functions in the pathway porphyrin-containing compound metabolism; protoheme biosynthesis; protoheme from protoporphyrin-IX: step 1/1. In terms of biological role, catalyzes the ferrous insertion into protoporphyrin IX. The polypeptide is Ferrochelatase-2, chloroplastic (HEMH) (Cucumis sativus (Cucumber)).